The chain runs to 120 residues: UPF0231 protein Ent638_0667 (120 aa).

It belongs to the UPF0231 family.

The polypeptide is UPF0231 protein Ent638_0667 (Enterobacter sp. (strain 638)).